Reading from the N-terminus, the 399-residue chain is Myb-related transcription factor, partner of profilin (399 aa).

The region spanning 12–84 is the Myb-like domain; that stretch reads TTRLRKPRFS…EVQKRWNDFK (73 aa). The Nuclear localization signal signature appears at 83-86; it reads FKRR. 4 disordered regions span residues 87–108, 127–261, 297–332, and 358–399; these read TKEK…AEDA, PGAG…PSLD, LLPG…PKVE, and APRS…WKSP. Over residues 127 to 136 the composition is skewed to low complexity; that stretch reads PGAGAGAEEP. A compositionally biased stretch (pro residues) spans 137-149; the sequence is PAAPSSQPPPPSA. Over residues 156-170 the composition is skewed to basic and acidic residues; the sequence is LSEDRREDRRADTSA. Composition is skewed to pro residues over residues 219-252, 305-329, and 366-377; these read SPPP…PPPT, SLPP…PPAP, and PRPPPAPLPPHD. The segment covering 381-399 has biased composition (basic residues); that stretch reads HKRRKGFPTRKRRGRWKSP. 2 short sequence motifs (nuclear localization signal) span residues 382-385 and 390-393; these read KRRK and RKRR.

As to quaternary structure, interacts with PFN1. Homodimer and heterodimer with PFN1.

Its subcellular location is the nucleus. Transcriptional repressor; DNA-binding protein that specifically recognizes the core sequence 5'-YAAC[GT]G-3'. Dimerization with PFN1 reduces its DNA-binding capacity. This Homo sapiens (Human) protein is Myb-related transcription factor, partner of profilin (MYPOP).